A 135-amino-acid polypeptide reads, in one-letter code: Large ribosomal subunit protein uL16 (135 aa).

Belongs to the universal ribosomal protein uL16 family. As to quaternary structure, part of the 50S ribosomal subunit.

In terms of biological role, binds 23S rRNA and is also seen to make contacts with the A and possibly P site tRNAs. This chain is Large ribosomal subunit protein uL16, found in Desulfatibacillum aliphaticivorans.